The chain runs to 189 residues: uncharacterized protein (189 aa).

A run of 4 helical transmembrane segments spans residues 49–69 (LLGILKLITFPVLCAAGLFVF), 78–98 (LFHKSFQGCSGYVLATFLSLF), 102–122 (LTIVGIVSCITWAPGFIFPMI), and 124–144 (VSIAFATVETCFQIYTHLFPA). The tract at residues 165–189 (SSSAPDLNYPSLPTQSASPSQRFSA) is disordered.

The protein belongs to the chlamydial CPn_0442/CT_006/TC_0274 family.

The protein localises to the cell membrane. This is an uncharacterized protein from Chlamydia trachomatis serovar D (strain ATCC VR-885 / DSM 19411 / UW-3/Cx).